The chain runs to 378 residues: Pulmonary surfactant-associated protein D (378 aa).

The signal sequence occupies residues 1-20; that stretch reads MLLLPLSVLILLTQPPRSLG. S-nitrosocysteine occurs at positions 35 and 40. The interval 43 to 221 is disordered; it reads MENGLPGRDG…ERGAKGESGL (179 aa). The Collagen-like domain maps to 46-222; that stretch reads GLPGRDGRDG…RGAKGESGLP (177 aa). The segment covering 50-65 has biased composition (basic and acidic residues); sequence RDGRDGREGPRGEKGD. Proline 78 carries the 4-hydroxyproline modification. Lysine 87 is subject to 5-hydroxylysine. Asparagine 90 is a glycosylation site (N-linked (GlcNAc...) asparagine). Proline 96 carries the post-translational modification 4-hydroxyproline. Lysine 99 carries the post-translational modification 5-hydroxylysine. A compositionally biased stretch (pro residues) spans 105–114; that stretch reads CGPPGPPGIP. A compositionally biased stretch (low complexity) spans 137-146; the sequence is PKGETGPKGE. A 4-hydroxyproline mark is found at proline 171 and proline 177. A compositionally biased stretch (low complexity) spans 173 to 197; it reads ERGAPGSAGAAGPAGATGPQGPSGA. Basic and acidic residues predominate over residues 204 to 216; it reads KGDRGPPGERGAK. Positions 223 to 254 form a coiled coil; the sequence is GITALRQQVETLQGQVQRLQKAFSQYKKVELF. Residues 260-378 form the C-type lectin domain; it reads VGEKIFKTGG…GELRLVICEF (119 aa). Disulfide bonds link cysteine 281–cysteine 376 and cysteine 354–cysteine 368. Asparagine 323 carries an N-linked (GlcNAc...) asparagine glycan.

This sequence belongs to the SFTPD family. Oligomeric complex of 4 set of homotrimers. Post-translationally, hydroxylation on proline residues within the sequence motif, GXPG, is most likely to be 4-hydroxy as this fits the requirement for 4-hydroxylation in vertebrates. S-nitrosylation at Cys-35 and Cys-40 alters the quaternary structure which results in a pro-inflammatory chemoattractive signaling activity with macrophages.

It is found in the secreted. It localises to the extracellular space. The protein localises to the extracellular matrix. Its subcellular location is the surface film. Contributes to the lung's defense against inhaled microorganisms, organic antigens and toxins. Interacts with compounds such as bacterial lipopolysaccharides, oligosaccharides and fatty acids and modulates leukocyte action in immune response. May participate in the extracellular reorganization or turnover of pulmonary surfactant. Binds strongly maltose residues and to a lesser extent other alpha-glucosyl moieties. This Sus scrofa (Pig) protein is Pulmonary surfactant-associated protein D (SFTPD).